The chain runs to 411 residues: MSVGCACPGCSSKSFKLYSPKEPPNGNAFPPFHPGTMLDRDVGPTPMYPPTYLEPGIGRHTPYGNQTDYRIFELNKRLQNWTEECDNLWWDAFTTEFFEDDAMLTITFCLEDGPKRYTIGRTLIPRYFRSIFEGGATELYYVLKHPKEAFHSNFVSLDCDQGSMVTQHGKPMFTQVCVEGRLYLEFMFDDMMRIKTWHFSIRQHRELIPRSILAMHAQDPQMLDQLSKNITRCGLSNSTLNYLRLCVILEPMQELMSRHKTYSLSPRDCLKTCLFQKWQRMVAPPAEPTRQQPSKRRKRKMSGGSTMSSGGGNTNNSNSKKKSPASTFALSSQVPDVMVVGEPTLMGGEFGDEDERLITRLENTQFDAANGIDDEDSFNNSPALGANSPWNSKPPSSQESKSENPTSQASQ.

S2 carries the N-acetylserine modification. Position 61 is a phosphothreonine (T61). S265 and S302 each carry phosphoserine. 2 disordered regions span residues 283–330 (APPA…TFAL) and 367–411 (DAAN…QASQ). Residues 302–318 (SGGSTMSSGGGNTNNSN) are compositionally biased toward low complexity. Residues 336 to 375 (DVMVVGEPTLMGGEFGDEDERLITRLENTQFDAANGIDDE) enclose the LIM interaction domain (LID) domain.

The protein belongs to the LDB family. In terms of assembly, interacts with ESR1. Forms homodimers and heterodimers. Interacts with and activates LHX1/LIM1. Interacts with the LIM domains of ISL1 and LMO2. Can assemble in a complex with LMO2 and TAL1/SCL but does not interact with TAL1/SCL directly. Strongly interacts with the LIM2 domain of LMX1A and more weakly with the LIM1 domain. Homodimerization is not required for, and does not effect, LMX1A-binding. Component of a nuclear TAL-1 complex composed at least of CBFA2T3, LDB1, TAL1 and TCF3. Interacts with LHX6 and LHX9. At neuronal promoters, forms a complex with LHX3 involved in the specification of interneurons, in motor neurons, it is displaced by ISL1 to form a ternary complex in which ISL1 contacts both LHX3 and LDB1. Interacts with SLK; leading to negatively regulate SLK kinase activity. Interacts with YWHAZ. Interacts with PRDM1/BLIMP1. Interacts with LMO4. Interacts with RLIM/RNF12; the interaction inhibits the ubiquitination of LMO proteins. In terms of processing, ubiquitinated by RLIM/RNF12, leading to its degradation by the proteasome. As to expression, expressed in a wide range of adult tissues including brain, heart, skeletal muscle, colon, thymus, spleen, kidney, liver, small intestine, lung and peripheral blood leukocytes.

Its subcellular location is the nucleus. Binds to the LIM domain of a wide variety of LIM domain-containing transcription factors. May regulate the transcriptional activity of LIM-containing proteins by determining specific partner interactions. Plays a role in the development of interneurons and motor neurons in cooperation with LHX3 and ISL1. Acts synergistically with LHX1/LIM1 in axis formation and activation of gene expression. Acts with LMO2 in the regulation of red blood cell development, maintaining erythroid precursors in an immature state. The protein is LIM domain-binding protein 1 (LDB1) of Homo sapiens (Human).